We begin with the raw amino-acid sequence, 443 residues long: Diels-Alderase poxQ (443 aa).

The signal sequence occupies residues 1-23; it reads MARIPLEFLSITLPVLLLAYCLA. N-linked (GlcNAc...) asparagine glycosylation is found at Asn78, Asn97, and Asn145.

The protein belongs to the Diels-Alderase family.

Its pathway is secondary metabolite biosynthesis. Its function is as follows. Diels-Alderase; part of the gene cluster that mediates the biosynthesis of oxaleimides, cytotoxic compounds containing an unusual disubstituted succinimide moiety. The first step of the pathway is provided by the HR-PKS poxF that serves in a new mode of collaborative biosynthesis with the PKS-NRPS poxE, by providing the olefin containing amino acid substrate via the synthesis of an ACP-bound dec-4-enoate. The cytochrome P450 monooxygenase poxM-catalyzed oxidation at the alpha-position creates the enzyme-bound 2-hydroxydec-4-enoyl-ACP thioester, which may be prone to spontaneous hydrolysis to yield 2-hydroxydec-4-enoic acid due to increased electrophilicity of the carbonyl. 2-hydroxydec-4-enoic acid can then be further oxidized by poxM to yield the alpha-ketoacid 2-oxodec-4-enoicacid, which is reductively aminated by the aminotransferase poxL to yield (S,E)-2-aminodec-4-enoic acid. The Hybrid PKS-NRPS synthetase poxE then performs condensation between the octaketide product of its PKS modules and the amino group of (S,E)-2-aminodec-4-enoic acid which is activated and incorporated by the adenylation domain. The resulting aminoacyl product can be cyclized by the Diels-Alderase PoxQ and reductively released by the reductive (R) domain of poxE to yield an aldehyde intermediate. The released aldehyde is then substrate for a Knoevenagel condensation by the hydrolyase poxO followed by an oxidation at the 5-position of the pyrrolidone ring. The presence of the olefin from the amino acid building block allows for migration of the substituted allyl group to occur. This allylic transposition reaction takes place in a conjugate addition, semipinacol-like fashion to yield a succinimide intermediate. Iterative two-electron oxidations of the C7 methyl of the succinimide intermediate to the carboxylic acid can be catalyzed by one of two remaining cytochrome P450 monooxygenasess poxC or poxD to yield oxaleimide A. Subsequent oxidation yields the maleimide scaffold oxaleimide I. Both oxaleimide A and oxaleimide I can undergo oxidative modifications in the decalin ring to yield the series of products oxaleimides B to H. This chain is Diels-Alderase poxQ, found in Penicillium oxalicum.